Consider the following 91-residue polypeptide: UPF0250 protein PFLU_5418 (91 aa).

Belongs to the UPF0250 family.

The chain is UPF0250 protein PFLU_5418 from Pseudomonas fluorescens (strain SBW25).